A 439-amino-acid polypeptide reads, in one-letter code: Trehalose-phosphatase (439 aa).

Mg(2+)-binding residues include D163 and D165. D165 acts as the Proton donor/acceptor in catalysis. Residue 282–284 participates in substrate binding; sequence QRK. D373 lines the Mg(2+) pocket.

Belongs to the gob-1 trehalose phosphatase family. The cofactor is Mg(2+). As to expression, ubiquitously expressed. Strong expression in intestine.

The enzyme catalyses alpha,alpha-trehalose 6-phosphate + H2O = alpha,alpha-trehalose + phosphate. Functionally, catalyzes the hydrolysis of trehalose 6-phosphate to trehalose and phosphate; prevents the accumulation of toxic levels of trehalose 6-phosphate. The sequence is that of Trehalose-phosphatase from Caenorhabditis elegans.